The following is a 156-amino-acid chain: ATP synthase subunit b (156 aa).

The chain crosses the membrane as a helical span at residues 7–27 (LFAQMVVFLILAWFTMKFVWP).

It belongs to the ATPase B chain family. In terms of assembly, F-type ATPases have 2 components, F(1) - the catalytic core - and F(0) - the membrane proton channel. F(1) has five subunits: alpha(3), beta(3), gamma(1), delta(1), epsilon(1). F(0) has three main subunits: a(1), b(2) and c(10-14). The alpha and beta chains form an alternating ring which encloses part of the gamma chain. F(1) is attached to F(0) by a central stalk formed by the gamma and epsilon chains, while a peripheral stalk is formed by the delta and b chains.

Its subcellular location is the cell inner membrane. In terms of biological role, f(1)F(0) ATP synthase produces ATP from ADP in the presence of a proton or sodium gradient. F-type ATPases consist of two structural domains, F(1) containing the extramembraneous catalytic core and F(0) containing the membrane proton channel, linked together by a central stalk and a peripheral stalk. During catalysis, ATP synthesis in the catalytic domain of F(1) is coupled via a rotary mechanism of the central stalk subunits to proton translocation. Functionally, component of the F(0) channel, it forms part of the peripheral stalk, linking F(1) to F(0). In Paraburkholderia phymatum (strain DSM 17167 / CIP 108236 / LMG 21445 / STM815) (Burkholderia phymatum), this protein is ATP synthase subunit b.